A 794-amino-acid polypeptide reads, in one-letter code: Phenylalanine--tRNA ligase beta subunit (794 aa).

The tRNA-binding domain occupies 39–154 (SSSFSSIITA…ANTPLGESAC (116 aa)). A B5 domain is found at 403-481 (PPSPTLTLRT…QPWKIEKKKA (79 aa)). Residues D457, D463, E466, and E467 each contribute to the Mg(2+) site. Positions 697–793 (PIYPSSFRDI…QLDDTKGTID (97 aa)) constitute an FDX-ACB domain.

It belongs to the phenylalanyl-tRNA synthetase beta subunit family. Type 1 subfamily. As to quaternary structure, tetramer of two alpha and two beta subunits. Requires Mg(2+) as cofactor.

The protein resides in the cytoplasm. The enzyme catalyses tRNA(Phe) + L-phenylalanine + ATP = L-phenylalanyl-tRNA(Phe) + AMP + diphosphate + H(+). The chain is Phenylalanine--tRNA ligase beta subunit from Chlamydia abortus (strain DSM 27085 / S26/3) (Chlamydophila abortus).